Consider the following 201-residue polypeptide: uncharacterized protein (201 aa).

A helical transmembrane segment spans residues 11-31 (IIILTIMILTIIIFTRTINGL).

It is found in the membrane. This is an uncharacterized protein from Acanthamoeba polyphaga mimivirus (APMV).